The sequence spans 825 residues: 5E5 antigen (825 aa).

Residues 126 to 825 (LSRDGYETET…RPRPSPKSPR (700 aa)) are disordered. A compositionally biased stretch (pro residues) spans 157 to 180 (PRAPPEPPDPGAPRPPPDPGPLPL). The segment covering 191–200 (VQVSTEQLLM) has biased composition (polar residues). Positions 217 to 237 (TRGDRTQEGGEKPREQREGPR) are enriched in basic and acidic residues. Residues 247–256 (QQEESPQQEP) show a composition bias toward low complexity. Composition is skewed to basic and acidic residues over residues 257-277 (SSER…HEGE), 315-342 (VPKD…RDWT), and 392-406 (QERE…ESPR). Residues 437-449 (RRPRKRRGRKGRM) show a composition bias toward basic residues. Residues 455–477 (TTATSASATGGPAEEAGASAPEG) show a composition bias toward low complexity. The segment covering 485–505 (GRARGPRQQARRRHGPQRRRG) has biased composition (basic residues). Positions 524–536 (GTTSGEQRADQSQ) are enriched in polar residues. Residues 537–562 (TLPALAGAPTAHAHAVPGPGPAAATL) show a composition bias toward low complexity. The span at 565–575 (RGRRGSWRGGR) shows a compositional bias: basic residues. Positions 576-588 (RGGGAGASGGGRG) are enriched in gly residues. A compositionally biased stretch (pro residues) spans 721-733 (FPPPPPTRPPPVL). The span at 734–750 (LPLLRLTCAGDPGASRP) shows a compositional bias: low complexity.

Expressed in neurons.

It is found in the nucleus. Functionally, might have DNA-binding ability. This chain is 5E5 antigen, found in Rattus norvegicus (Rat).